The chain runs to 415 residues: MKLKSLLLRYYPPGIMLEYEKGGELKTKSIDLLELSPSTDVNTLVGEIQQAEPLITASRTKQVRLLVQRLQEKLRQHSDHNFYLFKVLRAHILPLTNVALNKAGSCFITGSYDRTCKVWDTASGEELHTLEGHKNVVYAIAFNNPYGDKIATGSFDKTCKLWSAETGKCYHTFRGHTAEIVCLSFNPQSTVVATGSMDTTAKLWDIQNGEEVVTLTGHLAEIISLSFDTSGDRIITGSFDHTVVVWDASTGRKVHTLIGHCAEISSALFNWDCSLILTGSMDKTCMLWDATSGKYVATLTGHDDEILDSCFDYTGKLIATASADGTARVYNATTRKCVTKLEGHEGEISKISFNPQGNRLLTGSSDKTARIWDVQTGQCLQVLEGHTDEIFSCAFNYKGNIVITGSKDNSCRIWR.

8 WD repeats span residues 90 to 129 (AHIL…ELHT), 132 to 174 (GHKN…HTFR), 175 to 214 (GHTA…EVVT), 217 to 256 (GHLA…KVHT), 259 to 298 (GHCA…YVAT), 301 to 340 (GHDD…CVTK), 343 to 384 (GHEG…QVLE), and 386 to 415 (HTDE…RIWR).

It belongs to the WD repeat WDR69 family. In terms of assembly, interacts with IFT46. In early mouse embryos, expression is limited to distal, motile ciliated cells of the node.

It localises to the cytoplasm. Its subcellular location is the cytoskeleton. It is found in the flagellum basal body. The protein localises to the flagellum axoneme. In terms of biological role, required for axonemal dynein assembly and ciliary motility in ciliated organs, including Kupffer's vesicle, during embryogenesis. Facilitates the onset of robust cilia motility during development. The sequence is that of Dynein assembly factor with WD repeat domains 1 from Mus musculus (Mouse).